Here is a 439-residue protein sequence, read N- to C-terminus: Oocyte zinc finger protein XlCOF28 (439 aa).

9 C2H2-type zinc fingers span residues 6 to 28 (YECT…QRTH), 34 to 56 (FKCT…KKCH), 62 to 84 (YMCT…IRTH), 90 to 112 (FTCT…LRIH), 118 to 140 (HKCN…QRTH), 146 to 168 (FQCT…LRIH), 174 to 196 (YKCS…QRTH), 202 to 224 (FQCS…ERTH), and 230 to 252 (YKCS…QKTH). Disordered stretches follow at residues 246-275 (KLHQ…APKT) and 285-304 (AGLE…ESPE). 4 consecutive C2H2-type zinc fingers follow at residues 333-355 (HKCT…QRTH), 361-383 (FKCS…RKIH), 389-411 (YTCA…RRTH), and 417-439 (YICA…QRIH).

It belongs to the krueppel C2H2-type zinc-finger protein family.

Its subcellular location is the nucleus. Functionally, may be involved in transcriptional regulation. In Xenopus laevis (African clawed frog), this protein is Oocyte zinc finger protein XlCOF28.